Here is a 144-residue protein sequence, read N- to C-terminus: Transcription antitermination protein NusB (144 aa).

It belongs to the NusB family.

Its function is as follows. Involved in transcription antitermination. Required for transcription of ribosomal RNA (rRNA) genes. Binds specifically to the boxA antiterminator sequence of the ribosomal RNA (rrn) operons. The chain is Transcription antitermination protein NusB from Haemophilus influenzae (strain PittGG).